Here is a 153-residue protein sequence, read N- to C-terminus: Aspartate carbamoyltransferase regulatory chain (153 aa).

Residues C109, C114, C138, and C141 each contribute to the Zn(2+) site.

This sequence belongs to the PyrI family. In terms of assembly, contains catalytic and regulatory chains. Zn(2+) is required as a cofactor.

Involved in allosteric regulation of aspartate carbamoyltransferase. The polypeptide is Aspartate carbamoyltransferase regulatory chain (Vibrio parahaemolyticus serotype O3:K6 (strain RIMD 2210633)).